A 147-amino-acid chain; its full sequence is Large ribosomal subunit protein bL9 (147 aa).

Belongs to the bacterial ribosomal protein bL9 family.

Functionally, binds to the 23S rRNA. This Campylobacter jejuni subsp. jejuni serotype O:2 (strain ATCC 700819 / NCTC 11168) protein is Large ribosomal subunit protein bL9.